The following is a 499-amino-acid chain: GTPase Der (499 aa).

EngA-type G domains lie at 3-166 (PVVA…LETL) and 213-386 (IKFA…QSAT). Residues 9-16 (GRPNVGKS), 56-60 (DTGGI), 118-121 (NKTD), 219-226 (GRPNVGKS), 266-270 (DTAGV), and 331-334 (NKWD) contribute to the GTP site. Residues 387-471 (RRTSTAMLTR…PVRVEFQESA (85 aa)) enclose the KH-like domain.

This sequence belongs to the TRAFAC class TrmE-Era-EngA-EngB-Septin-like GTPase superfamily. EngA (Der) GTPase family. Associates with the 50S ribosomal subunit.

GTPase that plays an essential role in the late steps of ribosome biogenesis. The protein is GTPase Der of Aeromonas hydrophila subsp. hydrophila (strain ATCC 7966 / DSM 30187 / BCRC 13018 / CCUG 14551 / JCM 1027 / KCTC 2358 / NCIMB 9240 / NCTC 8049).